Reading from the N-terminus, the 154-residue chain is Ribosomal RNA large subunit methyltransferase H (154 aa).

S-adenosyl-L-methionine is bound by residues Leu-70 and Gly-102.

It belongs to the RNA methyltransferase RlmH family. Homodimer.

The protein localises to the cytoplasm. It carries out the reaction pseudouridine(1915) in 23S rRNA + S-adenosyl-L-methionine = N(3)-methylpseudouridine(1915) in 23S rRNA + S-adenosyl-L-homocysteine + H(+). Functionally, specifically methylates the pseudouridine at position 1915 (m3Psi1915) in 23S rRNA. This Hyphomonas neptunium (strain ATCC 15444) protein is Ribosomal RNA large subunit methyltransferase H.